The following is a 469-amino-acid chain: ATP synthase subunit beta (469 aa).

153–160 (GGAGVGKT) lines the ATP pocket.

It belongs to the ATPase alpha/beta chains family. F-type ATPases have 2 components, CF(1) - the catalytic core - and CF(0) - the membrane proton channel. CF(1) has five subunits: alpha(3), beta(3), gamma(1), delta(1), epsilon(1). CF(0) has three main subunits: a(1), b(2) and c(9-12). The alpha and beta chains form an alternating ring which encloses part of the gamma chain. CF(1) is attached to CF(0) by a central stalk formed by the gamma and epsilon chains, while a peripheral stalk is formed by the delta and b chains.

Its subcellular location is the cell membrane. It catalyses the reaction ATP + H2O + 4 H(+)(in) = ADP + phosphate + 5 H(+)(out). Its function is as follows. Produces ATP from ADP in the presence of a proton gradient across the membrane. The catalytic sites are hosted primarily by the beta subunits. The sequence is that of ATP synthase subunit beta from Pediococcus pentosaceus (strain ATCC 25745 / CCUG 21536 / LMG 10740 / 183-1w).